Here is a 147-residue protein sequence, read N- to C-terminus: Hemoglobin subunit gamma-1 (147 aa).

Residue glycine 2 is modified to N-acetylglycine; in form Hb F1. The Globin domain maps to 3–147 (HFTEEDKATI…VASALSSRYH (145 aa)). At threonine 13 the chain carries Phosphothreonine. A phosphoserine mark is found at serine 45, serine 51, and serine 53. N6-acetyllysine is present on lysine 60. Histidine 64 is a binding site for heme b. Lysine 83 is modified (N6-acetyllysine). Histidine 93 serves as a coordination point for heme b. Cysteine 94 is subject to S-nitrosocysteine. Serine 140 carries the phosphoserine modification.

It belongs to the globin family. In terms of assembly, heterotetramer of two alpha chains and two gamma chains in fetal hemoglobin (Hb F). In the case of deletions affecting one or more of the alpha chains, the excess gamma chains form homotetramers that exhibit neither Bohr effect nor heme-heme cooperativity (hemoglobin Bart's). In terms of processing, acetylation of Gly-2 converts Hb F to the minor Hb F1. In terms of tissue distribution, red blood cells.

Gamma chains make up the fetal hemoglobin F, in combination with alpha chains. This chain is Hemoglobin subunit gamma-1 (HBG1), found in Homo sapiens (Human).